A 206-amino-acid polypeptide reads, in one-letter code: Large ribosomal subunit protein uL22m (206 aa).

A mitochondrion-targeting transit peptide spans 1-40 (MAAAVLGQLGALWIHNLRSRGKLALGVLPQSYIHTSASLD).

The protein belongs to the universal ribosomal protein uL22 family. In terms of assembly, component of the mitochondrial large ribosomal subunit (mt-LSU). Mature mammalian 55S mitochondrial ribosomes consist of a small (28S) and a large (39S) subunit. The 28S small subunit contains a 12S ribosomal RNA (12S mt-rRNA) and 30 different proteins. The 39S large subunit contains a 16S rRNA (16S mt-rRNA), a copy of mitochondrial valine transfer RNA (mt-tRNA(Val)), which plays an integral structural role, and 52 different proteins.

The protein localises to the mitochondrion. This chain is Large ribosomal subunit protein uL22m (MRPL22), found in Homo sapiens (Human).